We begin with the raw amino-acid sequence, 608 residues long: Dolichyl-diphosphooligosaccharide--protein glycosyltransferase subunit 1 (608 aa).

A signal peptide spans 1 to 24 (MEAPAVCLLPLLLLLWAWAPAPGR). The Lumenal portion of the chain corresponds to 25-435 (ASPEALPLVN…VVHYTFNKVL (411 aa)). Position 188 is an N6-acetyllysine (Lys188). N-linked (GlcNAc...) asparagine glycosylation is present at Asn300. The helical transmembrane segment at 436-456 (MLQEPLLVVAAFYILFFTVIV) threads the bilayer. Residues 457 to 607 (YVRLDFSITK…VTKIDHILDA (151 aa)) lie on the Cytoplasmic side of the membrane. Residue Lys539 is modified to N6-acetyllysine; alternate. Residue Lys539 forms a Glycyl lysine isopeptide (Lys-Gly) (interchain with G-Cter in SUMO2); alternate linkage.

It belongs to the OST1 family. As to quaternary structure, component of the oligosaccharyltransferase (OST) complex. OST exists in two different complex forms which contain common core subunits RPN1, RPN2, OST48, OST4, DAD1 and TMEM258, either STT3A or STT3B as catalytic subunits, and form-specific accessory subunits. STT3A complex assembly occurs through the formation of 3 subcomplexes. Subcomplex 1 contains RPN1 and TMEM258, subcomplex 2 contains the STT3A-specific subunits STT3A, DC2/OSTC, and KCP2 as well as the core subunit OST4, and subcomplex 3 contains RPN2, DAD1, and OST48. The STT3A complex can form stable complexes with the Sec61 complex or with both the Sec61 and TRAP complexes. Interacts with TMEM35A/NACHO. Post-translationally, ubiquitinated by the ECS(ASB11) complex. In terms of processing, ufmylated by UFL1 in response to endoplasmic reticulum stress, promoting reticulophagy of endoplasmic reticulum sheets. In terms of tissue distribution, detected in liver (at protein level).

The protein resides in the endoplasmic reticulum membrane. Its pathway is protein modification; protein glycosylation. Its function is as follows. Subunit of the oligosaccharyl transferase (OST) complex that catalyzes the initial transfer of a defined glycan (Glc(3)Man(9)GlcNAc(2) in eukaryotes) from the lipid carrier dolichol-pyrophosphate to an asparagine residue within an Asn-X-Ser/Thr consensus motif in nascent polypeptide chains, the first step in protein N-glycosylation. N-glycosylation occurs cotranslationally and the complex associates with the Sec61 complex at the channel-forming translocon complex that mediates protein translocation across the endoplasmic reticulum (ER). All subunits are required for a maximal enzyme activity. The chain is Dolichyl-diphosphooligosaccharide--protein glycosyltransferase subunit 1 from Sus scrofa (Pig).